Consider the following 579-residue polypeptide: MFS-type transporter sphD (579 aa).

Residues 17–62 (SAFAVRAEPDSEPVSEKQGTAETDAETGAGGTEVPAERNGEDDVER) form a disordered region. Basic and acidic residues predominate over residues 51–62 (PAERNGEDDVER). Helical transmembrane passes span 73–93 (AFIG…ALGI), 110–130 (FWAN…WASI), 138–158 (PPLY…AVAQ), 168–188 (VLQG…LADM), 200–220 (LMAI…ALFA), 227–247 (WIGW…FFFL), 267–287 (WIGM…LSWA), and 294–314 (GAWQ…IFAF). Asparagine 335 carries N-linked (GlcNAc...) asparagine glycosylation. A run of 6 helical transmembrane segments spans residues 338 to 358 (LVGG…LPLI), 367 to 391 (AILS…SMML), 398 to 419 (YVWI…LALF), 429 to 449 (LGLP…LLPM), 460 to 480 (GLAI…GLTI), and 541 to 561 (FQTI…TSLF).

The protein belongs to the major facilitator superfamily.

It is found in the membrane. Its function is as follows. MFS-type transporter; part of the gene cluster that mediates the biosynthesis of sphingofungins, bioactive molecules acting as sphingolipid inhibitors via inhibiting serine palmitoyl transferase (SPT). The sequence is that of MFS-type transporter sphD from Aspergillus fumigatus (strain CBS 144.89 / FGSC A1163 / CEA10) (Neosartorya fumigata).